The primary structure comprises 157 residues: Protein TIFY 8 (157 aa).

The Tify domain maps to 33–68; the sequence is VPGTTEQLTIFYSGSMVKFDNVPREKIRYACRLRRL. The segment at 126–147 is disordered; it reads SIGAQRTGTPPSRRRIHARGKS. Basic residues predominate over residues 137–147; sequence SRRRIHARGKS.

Belongs to the TIFY/JAZ family. Ubiquitinated. Targeted for degradation by the SCF(COI1) E3 ubiquitin ligase-proteasome pathway during jasmonate signaling.

Repressor of jasmonate responses. This Oryza sativa subsp. japonica (Rice) protein is Protein TIFY 8.